The primary structure comprises 4981 residues: MDLAPDRATGRPWLPLHTLSVSQLLRVFWLLSLLPGQAWVHGAEPRQVFQVLEEQPPGTLVGTIQTRPGFTYRLSESHALFAINSSTGALYTTSTIDRESLPSDVINLVVLSSAPTYPTEVRVLVRDLNDNAPVFPDPSIVVTFKEDSSSGRQVILDTATDSDIGSNGVDHRSYRIIRGNEAGRFRLDITLNPSGEGAFLHLVSKGGLDREVTPQYQLLVEVEDKGEPKRRGYLQVNVTVQDINDNPPVFGSSHYQAGVPEDAVVGSSVLQVAAADADEGTNADIRYRLQDEGTPFQMDPETGLITVREPLDFEARRQYSLTVQAMDRGVPSLTGRAEALIQLLDVNDNDPVVKFRYFPATSRYASVDENAQVGTVVALLTVTDADSPAANGNISVQILGGNEQRHFEVQSSKVPNLSLIKVASALDRERIPSYNLTVSVSDNYGAPPGAAVQARSSVASLVIFVNDINDHPPVFSQQVYRVNLSEEAPPGSYVSGISATDGDSGLNANLRYSIVSGNGLGWFHISEHSGLVTTGSSGGLDRELASQIVLNISARDQGVHPKVSYAQLVVTLLDVNDEKPVFSQPEGYDVSVVENAPTGTELLMLRATDGDLGDNGTVRFSLQEAETDRRSFRLDPVSGRLSTISSLDREEQAFYSLLVLATDLGSPPQSSMARINVSLLDINDNSPVFYPVQYFAHIKENEPGGSYITTVSATDPDLGTNGTVKYSISAGDRSRFQVNAQSGVISTRMALDREEKTAYQLQIVATDGGNLQSPNQAIVTITVLDTQDNPPVFSQVAYSFVVFENVALGYHVGSVSASTMDLNSNISYLITTGDQKGMFAINQVTGQLTTANVIDREEQSFYQLKVVASGGTVTGDTMVNITVKDLNDNSPHFLQAIESVNVVENWQAGHSIFQAKAVDPDEGVNGMVLYSLKQNPKNLFAINEKNGTISLLGPLDVHAGSYQIEILASDMGVPQLSSSVILTVYVHDVNDNSPVFDQLSYEVTLSESEPVNSRFFKVQASDKDSGANGEIAYTIAEGNTGDAFGIFPDGQLYIKSELDRELQDRYVLMVVASDRAVEPLSATVNVTVILEDVNDNRPLFNSTNYTFYFEEEQRAGSFVGKVSAVDKDFGPNGEVRYSFEMVQPDFELHAISGEITNTHQFDRESLMRRRGTAVFSFTVIATDQGIPQPLKDQATVHVYMKDINDNAPKFLKDFYQATISESAANLTQVLRVSASDVDEGNNGLIHYSIIKGNEERQFAIDSTSGQVTLIGKLDYEATPAYSLVIQAVDSGTIPLNSTCTLNIDILDENDNTPSFPKSTLFVDVLENMRIGELVSSVTATDSDSGDNADLYYSITGTNNHGTFSISPNTGSIFLAKKLDFETQSLYKLNITAKDQGRPPRSSTMSVVIHVRDFNDNPPSFPPGDIFKSIVENIPIGTSVISVTAHDPDADINGQLSYTIIQQMPRGNHFTIDEVKGTIYTNAEIDREFANLFELTVKANDQAVPIETRRYALKNVTILVTDLNDNVPMFISQNALAADPSAVIGSVLTTIMAADPDEGANGEIEYEIINGDTDTFIVDRYSGDLRVASALVPSQLIYNLIVSATDLGPERRKSTTELTIILQGLDGPVFTQPKYITILKEGEPIGTNVISIEAASPRGSEAPVEYYIVSVRCEEKTVGRLFTIGRHTGIIQTAAILDREQGACLYLVDVYAIEKSTAFPRTQRAEVEITLQDINDNPPVFPTDMLDLTVEENIGDGSKIMQLTAMDADEGANALVTYTIISGADDSFRIDPESGDLIATRRLDRERRSKYSLLVRADDGLQSSDMRINITVSDVNDHTPKFSRPVYSFDIPEDTIPGSLVAAILATDDDSGVNGEITYIVNEDDEDGIFFLNPITGVFNLTRLLDYEVQQYYILTVRAEDGGGQFTTIRVYFNILDVNDNPPIFSLNSYSTSLMENLPVGSTVLVFNVTDADDGINSQLTYSIASGDSLGQFTVDKNGVLKVLKALDRESQSFYNLVVQVHDLPQIPASRFTSTAQVSIILLDVNDNPPTFLSPKLTYIPENTPIDTVVFKAQATDPDSGPNSYIEYTLLNPLGNKFSIGTIDGEVRLTGELDREEVSNYTLTVVATDKGQPSLSSSTEVVVMVLDINDNNPIFAQALYKVEINENTLTGTDIIQVFAADGDEGTNGQVRYGIVNGNTNQEFRIDSVTGAITVAKPLDREKTPTYHLTVQATDRGSTPRTDTSTVSIVLLDINDFVPVFELSPYSVNVPENLGTLPRTILQVVARDDDRGSNSKLSYVLFGGNEDNAFTLSASGELGVTQSLDRETKERFVLMITATDSGSPALTGTGTINVIVDDVNDNVPTFASKAYFTTIPEDAPTGTDVLLVNASDADASKNAVIRIIGGNSQFTINPSTGQIITSALLDRETKDNYTLVVVCSDAGSPEPLSSSTSVLVTVTDVNDNPPRFQHHPYVTHIPSPTLPGSFVFAVTVTDADIGPNSELHYSLSGRNSEKFHIDPLRGAIMAAGPLNGASEVTFSVHVKDGGSFPKTDSTTVTVRFVNKADFPKVRAKEQTFMFPENQPVSSLVTTITGSSLRGEPMSYYIASGNLGNTFQIDQLTGQVSISQPLDFEKIQKYVVWIEARDGGFPPFSSYEKLDITVLDVNDNAPIFKEDPFISEILENLSPRKILTVSAMDKDSGPNGQLDYEIVNGNMENSFSINHATGEIRSVRPLDREKVSHYVLTIKSSDKGSPSQSTSVKVMINILDENDNAPRFSQIFSAHVPENSPLGYTVTRVTTSDEDIGINAISRYSIMDASLPFTINPSTGDIVISRPLNREDTDRYRIRVSAHDSGWTVSTDVTIFVTDINDNAPRFSRTSYYLDCPELTEIGSKVTQVFATDPDEGSNGQVFYFIKSQSEYFRINATTGEIFNKQILKYQNVTGFSNVNINRHSFIVTSSDRGKPSLISETTVTINIVDSNDNAPQFLKSKYFTPVTKNVKVGTKLIRVTAIDDKDFGLNSEVEYFISNDNHLGKFKLDNDTGWISVASSLISDLNQNFFITVTAKDKGNPPLSSQATVHITVTEENYHTPEFSQSHMSATIPESHSIGSIVRTVSARDRDAAMNGLIKYSISSGNEEGIFAINSSTGILTLAKALDYELCQKHEMTISAIDGGWVARTGYCSVTVNVIDVNDNSPVFLSDDYFPTVLENAPSGTTVIHLNATDADSGTNAVIAYTVQSSDSDLFVIDPNTGVITTQGFLDFETKQSYHLTVKAFNVPDEERCSFATVNIQLKGTNEYVPRFVSKLYYFEISEAAPKGTIVGEVFASDRDLGTDGEVHYLIFGNSRKKGFQINKKTGQIYVSGILDREKEERVSLKVLAKNFGSIRGADIDEVTVNVTVLDANDPPIFTLNIYSVQISEGVPIGTHVTFVSAFDSDSIPSWSRFSYFIGSGNENGAFSINPQTGQITVTAELDRETLPIYNLSVLAVDSGTPSATGSASLLVTLEDINDNGPMLTVSEGEVMENKRPGTLVMTLQSTDPDLPPNQGPFTYYLLSTGPATSYFSLSTAGVLSTTREIDREQIADFYLSVVTKDSGVPQMSSTGTVHITVIDQNDNPSQSRTVEIFVNYYGNLFPGGILGSVKPQDPDVLDSFHCSLTSGVTSLFSIPGGTCDLNSQPRSTDGTFDLTVLSNDGVHSTVTSNIRVFFAGFSNATVDNSILLRLGVPTVKDFLTNHYLHFLRIASSQLTGLGTAVQLYSAYEENNRTFLLAAVKRNHNQYVNPSGVATFFESIKEILLRQSGVKVESVDHDSCVHGPCQNGGSCLRRLAVSSVLKSRESLPVIIVANEPLQPFLCKCLPGYAGSWCEIDIDECLPSPCHSGGTCHNLVGGFSCSCPDGFTGRACERDINECLQSPCKNGAICQNFPGSFNCVCKTGYTGKMCESSVNYCECNPCFNGGSCQSGVDSYYCHCPFGVFGKHCELNSYGFEELSYMEFPSLDPNNNYIYVKFATIKSHALLLYNYDNQTGDRAEFLALEIAEERLRFSYNLGSGTYKLTTMKKVSDGHFHTVIARRAGMAASLTVDSCSENQEPGYCTVSNVAVSDDWTLDVQPNRVTVGGIRSLEPILQRRGHVESHDFVGCIMEFAVNGRPLEPSQALAAQGILDQCPRLEGACTRSPCQHGGTCMDYWSWQQCHCKEGLTGKYCEKSVTPDTALSLEGKGRLDYHMSQNEKREYLLRQSLRGAMLEPFGVNSLEVKFRTRSENGVLIHIQESSNYTTVKIKNGKVYFTSDAGIAGKVERNIPEVYVADGHWHTFLIGKNGTATVLSVDRIYNRDIIHPTQDFGGLDVLTISLGGIPPNQAHRDAQTAGFDGCIASMWYGGESLPFSGKHSLASISKTDPSVKIGCRGPNICASNPCWGDLLCINQWYAYRCVPPGDCASHPCQNGGSCEPGLHSGFTCSCPDSHTGRTCEMVVACLGVLCPQGKVCKAGSPAGHVCVLSQGPEEISLPLWAVPAIVGSCATVLALLVLSLILCNQCRGKKAKNPKEEKKPKEKKKKGSENVAFDDPDNIPPYGDDMTVRKQPEGNPKPDIIERENPYLIYDETDIPHNSETIPSAPLASPEQEIEHYDIDNASSIAPSDADIIQHYKQFRSHTPKFSIQRHSPLGFARQSPMPLGASSLTYQPSYGQGLRTSSLSHSACPTPNPLSRHSPAPFSKSSTFYRNSPARELHLPIRDGNTLEMHGDTCQPGIFNYATRLGRRSKSPQAMASHGSRPGSRLKQPIGQIPLESSPPVGLSIEEVERLNTPRPRNPSICSADHGRSSSEEDCRRPLSRTRNPADGIPAPESSSDSDSHESFTCSEMEYDREKPMVYTSRMPKLSQVNESDADDEDNYGARLKPRRYHGRRAEGGPVGTQAAAPGTADNTLPMKLGQQAGTFNWDNLLNWGPGFGHYVDVFKDLASLPEKAAANEEGKAGTTKPVPKDGEAEQYV.

The first 38 residues, 1–38 (MDLAPDRATGRPWLPLHTLSVSQLLRVFWLLSLLPGQA), serve as a signal peptide directing secretion. Topologically, residues 39–4504 (WVHGAEPRQV…PEEISLPLWA (4466 aa)) are extracellular. 34 Cadherin domains span residues 43 to 135 (AEPR…APVF), 136 to 250 (PDPS…PPVF), 251 to 353 (GSSH…DPVV), 359 to 475 (PATS…PPVF), 476 to 582 (SQQV…KPVF), 584 to 689 (QPEG…SPVF), 690 to 793 (YPVQ…PPVF), 794 to 893 (SQVA…SPHF), 894 to 996 (LQAI…SPVF), 997 to 1100 (DQLS…RPLF), 1101 to 1210 (NSTN…APKF), 1211 to 1315 (LKDF…TPSF), 1316 to 1420 (PKST…PPSF), 1421 to 1529 (PPGD…VPMF), 1529 to 1629 (FISQ…GPVF), 1630 to 1740 (TQPK…PPVF), 1741 to 1841 (PTDM…TPKF), 1842 to 1944 (SRPV…PPIF), 1945 to 2051 (SLNS…PPTF), 2051 to 2154 (FLSP…NPIF), 2155 to 2259 (AQAL…VPVF), 2260 to 2364 (ELSP…VPTF), 2365 to 2466 (ASKA…PPRF), 2467 to 2567 (QHHP…FPKV), 2568 to 2669 (RAKE…APIF), 2670 to 2773 (KEDP…APRF), 2773 to 2872 (FSQI…APRF), 2873 to 2983 (SRTS…APQF), 2984 to 3089 (LKSK…TPEF), 3090 to 3194 (SQSH…SPVF), 3195 to 3298 (LSDD…VPRF), 3299 to 3404 (VSKL…PPIF), 3405 to 3510 (TLNI…GPML), and 3509 to 3620 (MLTV…VEIF). 2 N-linked (GlcNAc...) asparagine glycosylation sites follow: Asn-84 and Asn-237. 18 N-linked (GlcNAc...) asparagine glycosylation sites follow: Asn-393, Asn-416, Asn-435, Asn-483, Asn-551, Asn-615, Asn-676, Asn-721, Asn-825, Asn-880, Asn-946, Asn-1085, Asn-1101, Asn-1104, Asn-1225, Asn-1296, Asn-1389, and Asn-1514. N-linked (GlcNAc...) asparagine glycans are attached at residues Asn-1828, Asn-1899, Asn-1967, and Asn-2119. 2 N-linked (GlcNAc...) asparagine glycosylation sites follow: Asn-2387 and Asn-2430. Residues Asn-2921, Asn-2937, Asn-3036, Asn-3140, Asn-3217, Asn-3392, and Asn-3477 are each glycosylated (N-linked (GlcNAc...) asparagine). N-linked (GlcNAc...) asparagine glycans are attached at residues Asn-3706 and Asn-3758. In terms of domain architecture, EGF-like 1 spans 3802-3860 (DHDSCVHGPCQNGGSCLRRLAVSSVLKSRESLPVIIVANEPLQPFLCKCLPGYAGSWCE). Disulfide bonds link Cys-3806/Cys-3817, Cys-3811/Cys-3848, Cys-3850/Cys-3859, Cys-3866/Cys-3877, Cys-3871/Cys-3886, Cys-3888/Cys-3897, Cys-3904/Cys-3915, Cys-3909/Cys-3924, Cys-3926/Cys-3935, Cys-3942/Cys-3953, Cys-3947/Cys-3962, and Cys-3964/Cys-3973. The region spanning 3862 to 3898 (DIDECLPSPCHSGGTCHNLVGGFSCSCPDGFTGRACE) is the EGF-like 2; calcium-binding domain. In terms of domain architecture, EGF-like 3; calcium-binding spans 3900-3936 (DINECLQSPCKNGAICQNFPGSFNCVCKTGYTGKMCE). The EGF-like 4 domain occupies 3938 to 3974 (SVNYCECNPCFNGGSCQSGVDSYYCHCPFGVFGKHCE). Residues 3975–4159 (LNSYGFEELS…LAAQGILDQC (185 aa)) enclose the Laminin G-like 1 domain. Asn-4017 carries N-linked (GlcNAc...) asparagine glycosylation. 4 cysteine pairs are disulfide-bonded: Cys-4133/Cys-4159, Cys-4166/Cys-4177, Cys-4171/Cys-4186, and Cys-4188/Cys-4197. An EGF-like 5 domain is found at 4162–4198 (LEGACTRSPCQHGGTCMDYWSWQQCHCKEGLTGKYCE). One can recognise a Laminin G-like 2 domain in the interval 4217-4398 (YHMSQNEKRE…KTDPSVKIGC (182 aa)). Residues Asn-4267 and Asn-4312 are each glycosylated (N-linked (GlcNAc...) asparagine). 4 cysteine pairs are disulfide-bonded: Cys-4365/Cys-4398, Cys-4430/Cys-4441, Cys-4435/Cys-4451, and Cys-4453/Cys-4462. Residues 4426–4463 (PPGDCASHPCQNGGSCEPGLHSGFTCSCPDSHTGRTCE) enclose the EGF-like 6 domain. Residues 4505-4525 (VPAIVGSCATVLALLVLSLIL) traverse the membrane as a helical segment. Residues 4526 to 4981 (CNQCRGKKAK…PKDGEAEQYV (456 aa)) lie on the Cytoplasmic side of the membrane. 5 disordered regions span residues 4534-4584 (AKNP…PDII), 4680-4713 (QGLR…STFY), 4752-4856 (RSKS…MEYD), 4869-4911 (KLSQ…AAPG), and 4957-4981 (AAAN…EQYV). Residues 4680–4699 (QGLRTSSLSHSACPTPNPLS) are compositionally biased toward polar residues. The interval 4706 to 4795 (FSKSSTFYRN…GLSIEEVERL (90 aa)) is necessary and sufficient for interaction with MPDZ. Residues 4809 to 4821 (DHGRSSSEEDCRR) are compositionally biased toward basic and acidic residues. Ser-4876 bears the Phosphoserine mark. Positions 4971 to 4981 (VPKDGEAEQYV) are enriched in basic and acidic residues.

Heterophilic interaction with DCHS1; this interaction affects their respective protein levels. Interacts (via cytoplasmic domain) with MPDZ. Forms a complex with PALS1 and MPDZ. In terms of tissue distribution, widely expressed. Expressed in fetal brain, infant brain, brain tumor and colorectal cancer.

Its subcellular location is the membrane. Cadherins are calcium-dependent cell adhesion proteins. FAT4 plays a role in the maintenance of planar cell polarity as well as in inhibition of YAP1-mediated neuroprogenitor cell proliferation and differentiation. This is Protocadherin Fat 4 (FAT4) from Homo sapiens (Human).